Here is an 80-residue protein sequence, read N- to C-terminus: Bowman-Birk type proteinase inhibitor DE-4 (80 aa).

Over residues Asp1–Arg10 the composition is skewed to acidic residues. The interval Asp1–Pro29 is disordered. Over residues Ser15–Pro29 the composition is skewed to low complexity. Intrachain disulfides connect Cys18/Cys71, Cys19/Cys33, Cys22/Cys67, Cys23/Cys31, Cys41/Cys48, Cys45/Cys60, and Cys50/Cys58.

This sequence belongs to the Bowman-Birk serine protease inhibitor family.

In Philenoptera violacea (Apple-leaf), this protein is Bowman-Birk type proteinase inhibitor DE-4.